The sequence spans 218 residues: Ribonuclease T (218 aa).

In terms of domain architecture, Exonuclease spans 20-194 (VVIDVETAGF…YDAERTAELF (175 aa)). The Mg(2+) site is built by D23, E25, H181, and D186. H181 functions as the Proton donor/acceptor in the catalytic mechanism.

The protein belongs to the RNase T family. In terms of assembly, homodimer. Requires Mg(2+) as cofactor.

Functionally, trims short 3' overhangs of a variety of RNA species, leaving a one or two nucleotide 3' overhang. Responsible for the end-turnover of tRNA: specifically removes the terminal AMP residue from uncharged tRNA (tRNA-C-C-A). Also appears to be involved in tRNA biosynthesis. The protein is Ribonuclease T of Baumannia cicadellinicola subsp. Homalodisca coagulata.